A 507-amino-acid chain; its full sequence is ATP synthase subunit alpha, chloroplastic (507 aa).

An ATP-binding site is contributed by 170 to 177 (GDRQTGKT).

Belongs to the ATPase alpha/beta chains family. In terms of assembly, F-type ATPases have 2 components, CF(1) - the catalytic core - and CF(0) - the membrane proton channel. CF(1) has five subunits: alpha(3), beta(3), gamma(1), delta(1), epsilon(1). CF(0) has four main subunits: a, b, b' and c.

The protein localises to the plastid. Its subcellular location is the chloroplast thylakoid membrane. It catalyses the reaction ATP + H2O + 4 H(+)(in) = ADP + phosphate + 5 H(+)(out). Produces ATP from ADP in the presence of a proton gradient across the membrane. The alpha chain is a regulatory subunit. In Nicotiana tomentosiformis (Tobacco), this protein is ATP synthase subunit alpha, chloroplastic.